We begin with the raw amino-acid sequence, 232 residues long: Flagellar L-ring protein (232 aa).

A signal peptide spans 1-15 (MKKVLFYVLPFAFFG). A lipid anchor (N-palmitoyl cysteine) is attached at Cys-16. A lipid anchor (S-diacylglycerol cysteine) is attached at Cys-16.

Belongs to the FlgH family. In terms of assembly, the basal body constitutes a major portion of the flagellar organelle and consists of four rings (L,P,S, and M) mounted on a central rod.

Its subcellular location is the cell outer membrane. The protein resides in the bacterial flagellum basal body. Assembles around the rod to form the L-ring and probably protects the motor/basal body from shearing forces during rotation. The chain is Flagellar L-ring protein from Campylobacter jejuni subsp. jejuni serotype O:23/36 (strain 81-176).